A 290-amino-acid polypeptide reads, in one-letter code: Flap endonuclease Xni (290 aa).

Residue Asp-125 coordinates Mg(2+). The 5'-3' exonuclease domain occupies 181 to 275; that stretch reads VKTSQLIDFW…DIRLTTSSSA (95 aa). Residues Leu-192, Val-203, and Ile-206 each coordinate K(+). The segment at 205-210 is interaction with DNA; the sequence is GIGQVT.

This sequence belongs to the Xni family. Mg(2+) serves as cofactor. The cofactor is K(+).

Has flap endonuclease activity. During DNA replication, flap endonucleases cleave the 5'-overhanging flap structure that is generated by displacement synthesis when DNA polymerase encounters the 5'-end of a downstream Okazaki fragment. The protein is Flap endonuclease Xni of Colwellia psychrerythraea (strain 34H / ATCC BAA-681) (Vibrio psychroerythus).